We begin with the raw amino-acid sequence, 963 residues long: MIDAVLAKVFGTKNEREVKAMLPTVAAIGALEPQLRELSDIDLAAKTIEFKERIAQGATLDDLLIEAFAVVREAGRRVLNMRHFDVQLIGGMVLHKGKIAEMKTGEGKTLVATLPCYLNALGGQGVHVVTVNDYLARRDSEWMGRLYKFLGLRVGVIVHDLDDQERKDAYNADITYGTNNEFGFDYLRDNMKFRIDDCVQRVHNFAIVDEVDSILIDEARTPLIISGPSEESTDKYYKINRIIPKLVRGEVIDGKEPGEKYTTGDYTIDEKHKSSALTEEGVLKLEKLLNIGNLYDPQNIEWNHHVQQALRAHVLYQRDREYVIRDGDEGPEVVIVDEFTGRLMPGRRWSDGLHQAVEAKEGVKIQRENQTLATITFQNYFRMYKKLAGMTGTAETEAAEFYKIYKLEVVVIPTNRSMIRKENTDMVYRTEIEKFRNAAKEIKEYNAKGQPVLVGTISVEKSEHLSGILKKLGVKHEVLNAKNHEREAGIVSQAGRKNAVTVSTNMAGRGTDILLGGNAEFMTKDECLKRKVAEKLTEDQVQYVADEHFYYFTHNEQFYRVRRDLWDEIYKENKAYTDKEHDEVVELGGLHIVATERHESRRIDNQLRGRAGRQGDPGSSRFYLSLQDDLLRIFGGERMQNLMLRLGMEEDVPIESKLITKRIQKAQEAVEAQNFEARKHLLEYDDVNNKQRQTVYGLRRQLLEGEDQKQRVMEMVQGIIEQYIDMRCPDAKHPDNWEMGDLRNDILTQFGYKIDLNELASLSREEMTNTIFDRLQAKYQEKEDLVGADVIRQTERIVMLQVIDNQWKDHLLSMDELKQGIGNRAYGQKDPLVEYKKESYELFTAMMDRIEDETVRYLFFLQVNTGSGPVMPYPDEEEDGDEDSVEEEVRPDPTEQQRLAAKSTMEDFTRNVQRKKEREMEQLQFVGGDGSSTPQQVVAGQKVGRNDPCPCGSGKKYKKCHGS.

Residues Q87, 105–109, and D512 contribute to the ATP site; that span reads GEGKT. Disordered regions lie at residues 868 to 909 and 924 to 963; these read GPVM…EDFT and QFVGGDGSSTPQQVVAGQKVGRNDPCPCGSGKKYKKCHGS. A compositionally biased stretch (acidic residues) spans 874-886; it reads PDEEEDGDEDSVE. Residues C949, C951, C960, and H961 each contribute to the Zn(2+) site.

It belongs to the SecA family. Monomer and homodimer. Part of the essential Sec protein translocation apparatus which comprises SecA, SecYEG and auxiliary proteins SecDF. Other proteins may also be involved. It depends on Zn(2+) as a cofactor.

It is found in the cell inner membrane. The protein resides in the cytoplasm. It catalyses the reaction ATP + H2O + cellular proteinSide 1 = ADP + phosphate + cellular proteinSide 2.. In terms of biological role, part of the Sec protein translocase complex. Interacts with the SecYEG preprotein conducting channel. Has a central role in coupling the hydrolysis of ATP to the transfer of proteins into and across the cell membrane, serving as an ATP-driven molecular motor driving the stepwise translocation of polypeptide chains across the membrane. This Solibacter usitatus (strain Ellin6076) protein is Protein translocase subunit SecA.